A 503-amino-acid polypeptide reads, in one-letter code: ATP synthase subunit alpha (503 aa).

170–177 (GDRQTGKT) provides a ligand contact to ATP.

It belongs to the ATPase alpha/beta chains family. As to quaternary structure, F-type ATPases have 2 components, CF(1) - the catalytic core - and CF(0) - the membrane proton channel. CF(1) has five subunits: alpha(3), beta(3), gamma(1), delta(1), epsilon(1). CF(0) has three main subunits: a(1), b(2) and c(9-12). The alpha and beta chains form an alternating ring which encloses part of the gamma chain. CF(1) is attached to CF(0) by a central stalk formed by the gamma and epsilon chains, while a peripheral stalk is formed by the delta and b chains.

The protein resides in the cell inner membrane. The catalysed reaction is ATP + H2O + 4 H(+)(in) = ADP + phosphate + 5 H(+)(out). Its function is as follows. Produces ATP from ADP in the presence of a proton gradient across the membrane. The alpha chain is a regulatory subunit. The sequence is that of ATP synthase subunit alpha from Geobacter metallireducens (strain ATCC 53774 / DSM 7210 / GS-15).